An 862-amino-acid chain; its full sequence is Cytosolic carboxypeptidase 2 (862 aa).

In terms of domain architecture, Peptidase M14 spans 359–629 (YPYTYTDLQC…HVCDTLLDFC (271 aa)). Zn(2+) is bound by residues His-425, Glu-428, and His-521. The active-site Proton donor/acceptor is Glu-593. Disordered stretches follow at residues 669-692 (SDIP…DGPP), 704-728 (NQKT…EQYQ), and 750-836 (STLQ…PNWS). Positions 674-689 (SDIESSTSGSDSSLSD) are enriched in low complexity. Residues 711-721 (NPKKKRLQTRK) are compositionally biased toward basic residues. The segment covering 813–825 (ASCSPKRSTNSSL) has biased composition (polar residues).

It belongs to the peptidase M14 family. Interacts with RARRES1, KIF11 and MAPRE1. Zn(2+) is required as a cofactor. In terms of tissue distribution, widely expressed. Expressed in tissues with motile cilia such as testis, lung and trachea. Also detected in brain, eye, muscle, pancreas, intestine, stomach, pituitary, spleen, adrenal and kidney. Expressed in mitral and granular cells in brain.

It is found in the cytoplasm. The protein resides in the cytosol. The protein localises to the cytoskeleton. It localises to the microtubule organizing center. Its subcellular location is the centrosome. It is found in the centriole. The protein resides in the cilium basal body. It carries out the reaction (L-glutamyl)(n+1)-gamma-L-glutamyl-L-glutamyl-[protein] + H2O = (L-glutamyl)(n)-gamma-L-glutamyl-L-glutamyl-[protein] + L-glutamate. Its activity is regulated as follows. Inhibited by RARRES1. In terms of biological role, metallocarboxypeptidase that mediates deglutamylation of tubulin and non-tubulin target proteins. Catalyzes the removal of polyglutamate side chains present on the gamma-carboxyl group of glutamate residues within the C-terminal tail of tubulin protein. Specifically cleaves tubulin long-side-chains, while it is not able to remove the branching point glutamate. Also catalyzes the removal of polyglutamate residues from the carboxy-terminus of non-tubulin proteins such as MYLK. This chain is Cytosolic carboxypeptidase 2, found in Mus musculus (Mouse).